The following is a 187-amino-acid chain: Elongation factor P (187 aa).

Belongs to the elongation factor P family.

It is found in the cytoplasm. It participates in protein biosynthesis; polypeptide chain elongation. Involved in peptide bond synthesis. Stimulates efficient translation and peptide-bond synthesis on native or reconstituted 70S ribosomes in vitro. Probably functions indirectly by altering the affinity of the ribosome for aminoacyl-tRNA, thus increasing their reactivity as acceptors for peptidyl transferase. This is Elongation factor P from Chromobacterium violaceum (strain ATCC 12472 / DSM 30191 / JCM 1249 / CCUG 213 / NBRC 12614 / NCIMB 9131 / NCTC 9757 / MK).